Consider the following 590-residue polypeptide: MNVYRTHLCNELREEHIDQTVTLSGWVYRKRDHGKIIFVDLRDHYGITQLVFNDSDTTIFQLITTLRLESVITIKGIVKARDSSTINETLDTGSIEVIVSSINIETASEILPINIASMQDYSEDIRLTYRFLDLRRDKVKNNIILRSKVITEIRKSMENMGFIEIQTPILTSSSPEGARDYLVPSRIHHGKFYALPQAPQLFKQLLMVSGFDKYFQIAPCFRDEDARADRSPGEFYQLDIEMSFVTQEDIFNIIEPVMINIFSKFSNKTINKEFPKISYHDAMLYYGSDKPDLRNPLVIQDVTEIFRDSEFKIFNSNIKQGMVVRAIPAPNTAHNPRSFFDSKIEFAKTLGAQGLGYITFIDDSLAKGPIAKFLDKDRLDNIKLICNIKAGDSVFFVSEIADKAALFAGEVRTLLGKELNLIEENTFKFCWVIDFPYFKYDHKEKSINFFHNPFSMPQGGLEALENQDPLNILAYQYDIVCNGIEISSGAIRNHKLNIMYKAFSIAGYTKEMVDEKFKALTRAFKFGAPPHGGIAPGIDRIVMLLADVPNIREVICFPLNQSGEDLLMGSPSEIDNDHLKLLSLNIIKKT.

Glu176 is an L-aspartate binding site. Residues 200-203 are aspartate; it reads QLFK. 2 residues coordinate L-aspartate: Arg222 and His451. An ATP-binding site is contributed by 222 to 224; sequence RDE. Glu485 contacts ATP. Residue Arg492 participates in L-aspartate binding. 537 to 540 is a binding site for ATP; it reads GIDR.

This sequence belongs to the class-II aminoacyl-tRNA synthetase family. Type 1 subfamily. As to quaternary structure, homodimer.

The protein localises to the cytoplasm. It catalyses the reaction tRNA(Asx) + L-aspartate + ATP = L-aspartyl-tRNA(Asx) + AMP + diphosphate. Aspartyl-tRNA synthetase with relaxed tRNA specificity since it is able to aspartylate not only its cognate tRNA(Asp) but also tRNA(Asn). Reaction proceeds in two steps: L-aspartate is first activated by ATP to form Asp-AMP and then transferred to the acceptor end of tRNA(Asp/Asn). The protein is Aspartate--tRNA(Asp/Asn) ligase of Ehrlichia ruminantium (strain Welgevonden).